The primary structure comprises 309 residues: tRNA pseudouridine synthase B (309 aa).

Asp51 (nucleophile) is an active-site residue.

Belongs to the pseudouridine synthase TruB family. Type 1 subfamily.

It catalyses the reaction uridine(55) in tRNA = pseudouridine(55) in tRNA. In terms of biological role, responsible for synthesis of pseudouridine from uracil-55 in the psi GC loop of transfer RNAs. The polypeptide is tRNA pseudouridine synthase B (Coxiella burnetii (strain Dugway 5J108-111)).